The primary structure comprises 229 residues: Urease accessory protein UreG (229 aa).

The segment covering 1-15 has biased composition (basic and acidic residues); the sequence is MPPHFIDGEPHDHQH. Positions 1 to 20 are disordered; the sequence is MPPHFIDGEPHDHQHDRPRR. Position 34–41 (34–41) interacts with GTP; that stretch reads GPVGSGKT.

It belongs to the SIMIBI class G3E GTPase family. UreG subfamily. In terms of assembly, homodimer. UreD, UreF and UreG form a complex that acts as a GTP-hydrolysis-dependent molecular chaperone, activating the urease apoprotein by helping to assemble the nickel containing metallocenter of UreC. The UreE protein probably delivers the nickel.

It is found in the cytoplasm. Facilitates the functional incorporation of the urease nickel metallocenter. This process requires GTP hydrolysis, probably effectuated by UreG. In Rhodococcus jostii (strain RHA1), this protein is Urease accessory protein UreG.